The primary structure comprises 210 residues: Pyridoxine/pyridoxamine 5'-phosphate oxidase (210 aa).

Substrate-binding positions include 7 to 10 (REDY) and lysine 65. Residues 60 to 65 (RVVLLK), 75 to 76 (FT), arginine 81, lysine 82, and glutamine 104 contribute to the FMN site. Substrate contacts are provided by tyrosine 122, arginine 126, and serine 130. FMN is bound by residues 139–140 (QS) and tryptophan 183. 189–191 (RLH) is a substrate binding site. Arginine 193 serves as a coordination point for FMN.

It belongs to the pyridoxamine 5'-phosphate oxidase family. Homodimer. FMN is required as a cofactor.

It catalyses the reaction pyridoxamine 5'-phosphate + O2 + H2O = pyridoxal 5'-phosphate + H2O2 + NH4(+). The catalysed reaction is pyridoxine 5'-phosphate + O2 = pyridoxal 5'-phosphate + H2O2. It functions in the pathway cofactor metabolism; pyridoxal 5'-phosphate salvage; pyridoxal 5'-phosphate from pyridoxamine 5'-phosphate: step 1/1. Its pathway is cofactor metabolism; pyridoxal 5'-phosphate salvage; pyridoxal 5'-phosphate from pyridoxine 5'-phosphate: step 1/1. Its function is as follows. Catalyzes the oxidation of either pyridoxine 5'-phosphate (PNP) or pyridoxamine 5'-phosphate (PMP) into pyridoxal 5'-phosphate (PLP). The protein is Pyridoxine/pyridoxamine 5'-phosphate oxidase of Actinobacillus succinogenes (strain ATCC 55618 / DSM 22257 / CCUG 43843 / 130Z).